Reading from the N-terminus, the 395-residue chain is MKKKLSYMITIMLAFTLSLALGLFFNSAHADSLPQKNGANQKTTKVTVSNKDVPDAVRKLAEEQYLSRVALLDKASNHKATSYTLGEPFKIYKFNKESDGNYYYPVLNKKGDVVYVVTISPNPSNSKASKQQNNYSINVSPFLSKILNQYKNQKITILTNTKGYFALTEDGKVTLVLKTPRNNEKTYENATESTKPKDLNDFKQTASVTKPTLEYQSTRNEMYAEYVNQLKNFRIRETQGYNSWCAGYTMSALLNATYNTNRYNAESVMRYLHPNLRGHDFQFTGLTSNEMLRFGRSQGRNTQYLNRMTSYNEVDQLTTNNQGIAVLGKRVESSDGIHAGHAMAVAGNAKVNNGQKVILIWNPWDNGLMTQDAHSNIIPVSNGDHYEWYASIYGY.

The signal sequence occupies residues 1–30; the sequence is MKKKLSYMITIMLAFTLSLALGLFFNSAHA. Residues 31–221 constitute a propeptide that is removed on maturation; it reads DSLPQKNGAN…TLEYQSTRNE (191 aa). Catalysis depends on residues C245, H341, and N362.

It belongs to the peptidase C47 family. In terms of processing, proteolytically cleaved.

It is found in the secreted. It localises to the cell wall. Its function is as follows. Cysteine protease able to cleave elastin, insulin, myoglobin, fibronectin, fibrinogen, HMW-kininogen, alpha-1-protease inhibitor and alpha-1-antitrypsin. Along with other extracellular proteases may contribute to the colonization and infection of human tissues. In Staphylococcus epidermidis (strain ATCC 35984 / DSM 28319 / BCRC 17069 / CCUG 31568 / BM 3577 / RP62A), this protein is Extracellular cysteine protease (ecpA).